A 153-amino-acid polypeptide reads, in one-letter code: MIASAPTIRQATPADAAAWAQLRLGLWPDADDPLEELTQSLADAEGAVFLACAADGETVGFAEVRLRHDYVNGTESSPVGFLEGWYVQPQWQGSGVGRALLAAVQAWTRDAGCRELASDSRVEDVQAHAAHRACGFEETERVVYFRMPLEPSA.

Positions 6-153 (PTIRQATPAD…YFRMPLEPSA (148 aa)) constitute an N-acetyltransferase domain. Positions 27, 70, 83, 119, and 140 each coordinate substrate.

In terms of assembly, homodimer.

It carries out the reaction kanamycin B + acetyl-CoA = N(6')-acetylkanamycin B + CoA + H(+). Its function is as follows. Catalyzes the transfer of an acetyl group from acetyl-CoA to the 6'-amino group of aminoglycoside molecules conferring resistance to antibiotics containing the purpurosamine ring including amikacin, gentamicin, kanamycin B, tobramycin, netilmicin, and isepamicin. The polypeptide is Aminoglycoside N(6')-acetyltransferase type 1 (Stenotrophomonas maltophilia (Pseudomonas maltophilia)).